The chain runs to 74 residues: MEASAAKFIGAGLAAIGMIGSGIGVGNIWANLIATVGRNPSAKANVELYGWIGFAVTEAIALFALVVALMVLFA.

Transmembrane regions (helical) follow at residues 8–28 (FIGA…VGNI) and 52–72 (IGFA…LMVL).

The protein belongs to the ATPase C chain family. F-type ATPases have 2 components, F(1) - the catalytic core - and F(0) - the membrane proton channel. F(1) has five subunits: alpha(3), beta(3), gamma(1), delta(1), epsilon(1). F(0) has three main subunits: a(1), b(2) and c(10-14). The alpha and beta chains form an alternating ring which encloses part of the gamma chain. F(1) is attached to F(0) by a central stalk formed by the gamma and epsilon chains, while a peripheral stalk is formed by the delta and b chains.

The protein resides in the cell inner membrane. In terms of biological role, f(1)F(0) ATP synthase produces ATP from ADP in the presence of a proton or sodium gradient. F-type ATPases consist of two structural domains, F(1) containing the extramembraneous catalytic core and F(0) containing the membrane proton channel, linked together by a central stalk and a peripheral stalk. During catalysis, ATP synthesis in the catalytic domain of F(1) is coupled via a rotary mechanism of the central stalk subunits to proton translocation. Its function is as follows. Key component of the F(0) channel; it plays a direct role in translocation across the membrane. A homomeric c-ring of between 10-14 subunits forms the central stalk rotor element with the F(1) delta and epsilon subunits. This is ATP synthase subunit c from Paramagnetospirillum magneticum (strain ATCC 700264 / AMB-1) (Magnetospirillum magneticum).